We begin with the raw amino-acid sequence, 388 residues long: Galactokinase (388 aa).

33–36 contributes to the substrate binding site; that stretch reads EHTD. ATP is bound by residues S67 and 124–130; that span reads GAGLSSS. Residues S130 and E162 each contribute to the Mg(2+) site. D174 (proton acceptor) is an active-site residue. Y224 provides a ligand contact to substrate.

The protein belongs to the GHMP kinase family. GalK subfamily.

The protein localises to the cytoplasm. The enzyme catalyses alpha-D-galactose + ATP = alpha-D-galactose 1-phosphate + ADP + H(+). Its pathway is carbohydrate metabolism; galactose metabolism. Catalyzes the transfer of the gamma-phosphate of ATP to D-galactose to form alpha-D-galactose-1-phosphate (Gal-1-P). The sequence is that of Galactokinase from Lacticaseibacillus casei (strain BL23) (Lactobacillus casei).